The sequence spans 419 residues: LWamide neuropeptides (419 aa).

The signal sequence occupies residues 1 to 27 (MEKEMRNLMLLVLLTVILDNGIGKCNA). The disordered stretch occupies residues 27-48 (AKSEEDQDGNARNNRIDKNDDN). The propeptide occupies 28-104 (KSEEDQDGNA…ENLDIDSTVQ (77 aa)). At W110 the chain carries Tryptophan amide. A propeptide spanning residues 113–140 (EADFDNTRAHDSAQISDEKQSGLWVGDA) is cleaved from the precursor. Residues 120–132 (RAHDSAQISDEKQ) show a composition bias toward basic and acidic residues. Residues 120-332 (RAHDSAQISD…PGLWGRQVED (213 aa)) are disordered. The residue at position 146 (W146) is a Tryptophan amide. The propeptide occupies 149-150 (DA). The residue at position 156 (W156) is a Tryptophan amide. A propeptide spanning residues 159-160 (DA) is cleaved from the precursor. The residue at position 166 (W166) is a Tryptophan amide. A propeptide spanning residues 169–170 (DA) is cleaved from the precursor. At W176 the chain carries Tryptophan amide. A propeptide spanning residues 179–180 (DA) is cleaved from the precursor. W186 is subject to Tryptophan amide. Positions 189–190 (DA) are excised as a propeptide. W196 bears the Tryptophan amide mark. The propeptide occupies 199 to 200 (DA). Tryptophan amide is present on W206. Positions 209–210 (DA) are excised as a propeptide. A Tryptophan amide modification is found at W216. Positions 218 to 220 (GDA) are cleaved as a propeptide — seems to have a sequencing error or a mutation in position 218; Gly instead of Arg. Tryptophan amide is present on W226. Residues 229–230 (DA) constitute a propeptide that is removed on maturation. W236 carries the post-translational modification Tryptophan amide. Positions 239-240 (DA) are excised as a propeptide. W246 is subject to Tryptophan amide. The propeptide occupies 249–250 (DA). W256 carries the post-translational modification Tryptophan amide. A propeptide spanning residues 259–260 (DA) is cleaved from the precursor. W266 is modified (tryptophan amide). A propeptide spanning residues 269–270 (DA) is cleaved from the precursor. W276 is subject to Tryptophan amide. Positions 279–280 (DT) are excised as a propeptide. Position 286 is a tryptophan amide (W286). A propeptide spanning residues 289-290 (DA) is cleaved from the precursor. Residue W296 is modified to Tryptophan amide. 2 consecutive propeptides follow at residues 299–300 (DA) and 309–320 (DNNVIKSRSDDA). Position 326 is a tryptophan amide (W326). Residues 329–419 (QVEDGPTKIW…RRNNKKNNKF (91 aa)) constitute a propeptide that is removed on maturation.

Belongs to the LWamide neuropeptide family. As to expression, in planula larvae, expressed in a narrow ring of ectodermal neurosensory cells around the widest circumference at the anterior of the larvae. In primary polyps, expression is confined to endodermal cells of the hypostome. In mature polyps, expression is strong in the epidermis from the tentacle level to the base of the polyp and weak in the gastrodermal cells in the apical hypostome.

Its subcellular location is the secreted. Its function is as follows. LWamide peptides may be involved in induction of metamorphosis. This Hydractinia echinata (Snail fur) protein is LWamide neuropeptides.